The primary structure comprises 341 residues: BZIP domain-containing transcription factor BZP4 (341 aa).

Composition is skewed to polar residues over residues 1–32 (MESS…PTNE), 61–76 (LTES…SHSL), 128–139 (PLTSHSRSQITH), and 150–163 (YSSS…SPVS). 2 disordered regions span residues 1 to 95 (MESS…PHGM) and 118 to 254 (TNHS…DKKQ). Positions 178–192 (SPSSSSFPSSIPRTP) are enriched in low complexity. Composition is skewed to basic and acidic residues over residues 225–234 (TGDRKHEKDS) and 242–254 (EEYK…DKKQ). The interval 250–269 (KDKKQVRNRIGARRFRAKRK) is basic motif. The 59-residue stretch at 250 to 308 (KDKKQVRNRIGARRFRAKRKDYVNQLEAGIRLRDDEITNLQSQLESQRNEINELRLQLK) folds into the bZIP domain. The segment at 279-307 (IRLRDDEITNLQSQLESQRNEINELRLQL) is leucine-zipper.

This sequence belongs to the bZIP family.

The protein localises to the nucleus. Its subcellular location is the cytoplasm. Functionally, transcription factor that promotes the production of melanin, a pigment that serves as antioxidant, reactive oxygen species (ROS) scavenger and that protect fungal pathogens from radiation and host immune responses. The protein is BZIP domain-containing transcription factor BZP4 of Cryptococcus neoformans var. grubii serotype A (strain H99 / ATCC 208821 / CBS 10515 / FGSC 9487) (Filobasidiella neoformans var. grubii).